The primary structure comprises 353 residues: tRNA N6-adenosine threonylcarbamoyltransferase (353 aa).

Fe cation contacts are provided by histidine 115 and histidine 119. Substrate is bound by residues 138 to 142 (LVSGG), aspartate 171, glycine 184, and asparagine 276. Aspartate 304 contributes to the Fe cation binding site.

Belongs to the KAE1 / TsaD family. Fe(2+) is required as a cofactor.

It localises to the cytoplasm. The catalysed reaction is L-threonylcarbamoyladenylate + adenosine(37) in tRNA = N(6)-L-threonylcarbamoyladenosine(37) in tRNA + AMP + H(+). Required for the formation of a threonylcarbamoyl group on adenosine at position 37 (t(6)A37) in tRNAs that read codons beginning with adenine. Is involved in the transfer of the threonylcarbamoyl moiety of threonylcarbamoyl-AMP (TC-AMP) to the N6 group of A37, together with TsaE and TsaB. TsaD likely plays a direct catalytic role in this reaction. The protein is tRNA N6-adenosine threonylcarbamoyltransferase of Xanthomonas euvesicatoria pv. vesicatoria (strain 85-10) (Xanthomonas campestris pv. vesicatoria).